A 268-amino-acid chain; its full sequence is Ribosomal RNA small subunit methyltransferase A (268 aa).

S-adenosyl-L-methionine is bound by residues Asn23, Ile25, Gly50, Glu72, Asp97, and Asn116.

It belongs to the class I-like SAM-binding methyltransferase superfamily. rRNA adenine N(6)-methyltransferase family. RsmA subfamily.

It is found in the cytoplasm. The catalysed reaction is adenosine(1518)/adenosine(1519) in 16S rRNA + 4 S-adenosyl-L-methionine = N(6)-dimethyladenosine(1518)/N(6)-dimethyladenosine(1519) in 16S rRNA + 4 S-adenosyl-L-homocysteine + 4 H(+). In terms of biological role, specifically dimethylates two adjacent adenosines (A1518 and A1519) in the loop of a conserved hairpin near the 3'-end of 16S rRNA in the 30S particle. May play a critical role in biogenesis of 30S subunits. This chain is Ribosomal RNA small subunit methyltransferase A, found in Rickettsia prowazekii (strain Madrid E).